The chain runs to 393 residues: Phosphoglycerate kinase (393 aa).

Substrate-binding positions include 21-23 (DFN), Arg-36, 59-62 (HLGR), Arg-118, and Arg-151. ATP is bound by residues Lys-201, Glu-323, and 349–352 (GGDS).

Belongs to the phosphoglycerate kinase family. Monomer.

The protein resides in the cytoplasm. The enzyme catalyses (2R)-3-phosphoglycerate + ATP = (2R)-3-phospho-glyceroyl phosphate + ADP. The protein operates within carbohydrate degradation; glycolysis; pyruvate from D-glyceraldehyde 3-phosphate: step 2/5. The protein is Phosphoglycerate kinase of Moorella thermoacetica (strain ATCC 39073 / JCM 9320).